The following is a 244-amino-acid chain: Transcriptional activator protein FnrA (244 aa).

The HTH crp-type domain occupies 159–232 (KTADERIATF…GKEVRILDSI (74 aa)). A DNA-binding region (H-T-H motif) is located at residues 192–211 (RNEIGNYLGLAVETVSRVFT).

Transcriptional regulator of arginine deiminase. The sequence is that of Transcriptional activator protein FnrA (fnrA) from Stutzerimonas stutzeri (Pseudomonas stutzeri).